Here is a 620-residue protein sequence, read N- to C-terminus: bZIP transcription factor 49 (620 aa).

The Cytoplasmic segment spans residues 1 to 287 (MAEPVLEDTY…VAKVKKFKKV (287 aa)). Over residues 109–135 (SSCYNRESPTDSDFSGTSQSLSFSGQD) the composition is skewed to polar residues. Residues 109–155 (SSCYNRESPTDSDFSGTSQSLSFSGQDSAKRKTEIEEDSSDESRRLG) are disordered. Positions 172–235 (EKKKNVRLVR…VTLRQQMGTR (64 aa)) constitute a bZIP domain. A basic motif region spans residues 173-205 (KKKNVRLVRNRESAHLSRQRKKHYVEELEDKVK). Residues 211–218 (ISELSSKM) are leucine-zipper. Residues 288 to 308 (ASFSVFGFLFCMFLFGALVNI) form a helical membrane-spanning segment. Over 309-620 (SYGEYKSNYV…RPDVPHLMTS (312 aa)) the chain is Lumenal. Disordered regions lie at residues 343-364 (DSDQ…PRNS), 398-460 (ARDS…SNDQ), and 505-557 (PASP…RETK). N-linked (GlcNAc...) asparagine glycosylation is found at Asn-351 and Asn-363. Residues 352–364 (VSETENLGPPRNS) are compositionally biased toward polar residues. Composition is skewed to basic and acidic residues over residues 398-409 (ARDSETKNEEGK) and 432-441 (RTRDVSKHLY). Composition is skewed to polar residues over residues 447–460 (GLSS…SNDQ) and 508–519 (PHTQQCKNTSDT). N-linked (GlcNAc...) asparagine glycosylation is present at Asn-515. Positions 526–529 (RRIL) match the RRIL cleavage motif motif. N-linked (GlcNAc...) asparagine glycosylation is found at Asn-539 and Asn-546. The span at 540–557 (LTKEDHNSSSKDKFRETK) shows a compositional bias: basic and acidic residues.

The protein belongs to the bZIP family. Interacts with BZIP28.

Its subcellular location is the endoplasmic reticulum membrane. The protein resides in the nucleus. Its function is as follows. Transcriptional activator involved in stress responses. This chain is bZIP transcription factor 49, found in Arabidopsis thaliana (Mouse-ear cress).